The following is a 144-amino-acid chain: 3-hydroxyacyl-[acyl-carrier-protein] dehydratase FabZ (144 aa).

Residue His49 is part of the active site.

Belongs to the thioester dehydratase family. FabZ subfamily.

It is found in the cytoplasm. The catalysed reaction is a (3R)-hydroxyacyl-[ACP] = a (2E)-enoyl-[ACP] + H2O. Involved in unsaturated fatty acids biosynthesis. Catalyzes the dehydration of short chain beta-hydroxyacyl-ACPs and long chain saturated and unsaturated beta-hydroxyacyl-ACPs. The chain is 3-hydroxyacyl-[acyl-carrier-protein] dehydratase FabZ from Alkaliphilus oremlandii (strain OhILAs) (Clostridium oremlandii (strain OhILAs)).